We begin with the raw amino-acid sequence, 562 residues long: Nucleoprotein (562 aa).

The segment at 53–238 (MRRERRDDND…ITQEESQINI (186 aa)) is binding site for the cap structure m7GTP. Residues D381 and E383 each contribute to the Mn(2+) site. Zn(2+) contacts are provided by E391, C498, H501, and C522. Position 526 (D526) interacts with Mn(2+).

This sequence belongs to the arenaviridae nucleocapsid protein family. In terms of assembly, homomultimerizes to form the nucleocapsid. Binds to viral genomic RNA. Interacts with glycoprotein G2. Interacts with protein Z; this interaction probably directs the encapsidated genome to budding sites. Interacts with protein L; this interaction does not interfere with Z-L interaction. Interacts with host IKBKE (via Protein kinase domain); the interaction inhibits IKBKE kinase activity.

It is found in the virion. The protein resides in the host cytoplasm. Its function is as follows. Encapsidates the genome, protecting it from nucleases. The encapsidated genomic RNA is termed the nucleocapsid (NC). Serves as template for viral transcription and replication. The increased presence of protein N in host cell does not seem to trigger the switch from transcription to replication as observed in other negative strain RNA viruses. Through the interaction with host IKBKE, strongly inhibits the phosphorylation and nuclear translocation of host IRF3, a protein involved in interferon activation pathway, leading to the inhibition of interferon-beta and IRF3-dependent promoters activation. Also encodes a functional 3'-5' exoribonuclease that degrades preferentially dsRNA substrates and thereby participates in the suppression of interferon induction. This is Nucleoprotein from Tamiami mammarenavirus (isolate Rat/United States/W 10777/1964) (TAMV).